Consider the following 181-residue polypeptide: MTLVAGLGNIGKEYENTRHNVGFMLIDTMLKDGGFNSVSSGKFQGELFKKGSLLLLKPSTFMNLSGNSLKAVNDFYKPDNIIVIHDDLDLPFGTVRFKRGGSSGGHNGIKSIDNLIGNDYDRVRIGIGRGNNSVISYVLGEFIDDEKDRLKDVLAHCKNAVLELISCGDITQISSKFTLKA.

Residue Tyr-14 participates in tRNA binding. His-19 (proton acceptor) is an active-site residue. Residues Phe-61, Asn-63, and Asn-107 each contribute to the tRNA site.

Belongs to the PTH family. Monomer.

Its subcellular location is the cytoplasm. The catalysed reaction is an N-acyl-L-alpha-aminoacyl-tRNA + H2O = an N-acyl-L-amino acid + a tRNA + H(+). In terms of biological role, hydrolyzes ribosome-free peptidyl-tRNAs (with 1 or more amino acids incorporated), which drop off the ribosome during protein synthesis, or as a result of ribosome stalling. Its function is as follows. Catalyzes the release of premature peptidyl moieties from peptidyl-tRNA molecules trapped in stalled 50S ribosomal subunits, and thus maintains levels of free tRNAs and 50S ribosomes. The polypeptide is Peptidyl-tRNA hydrolase (Campylobacter fetus subsp. fetus (strain 82-40)).